The sequence spans 585 residues: Aspartate--tRNA(Asp/Asn) ligase (585 aa).

Glutamate 173 contributes to the L-aspartate binding site. The interval 197–200 is aspartate; it reads QLFK. Position 219 (arginine 219) interacts with L-aspartate. ATP contacts are provided by residues 219–221 and glutamine 228; that span reads RDE. Position 447 (histidine 447) interacts with L-aspartate. Residue glutamate 477 coordinates ATP. Arginine 484 contributes to the L-aspartate binding site. 529 to 532 serves as a coordination point for ATP; the sequence is GFDR.

It belongs to the class-II aminoacyl-tRNA synthetase family. Type 1 subfamily. In terms of assembly, homodimer.

Its subcellular location is the cytoplasm. It carries out the reaction tRNA(Asx) + L-aspartate + ATP = L-aspartyl-tRNA(Asx) + AMP + diphosphate. Aspartyl-tRNA synthetase with relaxed tRNA specificity since it is able to aspartylate not only its cognate tRNA(Asp) but also tRNA(Asn). Reaction proceeds in two steps: L-aspartate is first activated by ATP to form Asp-AMP and then transferred to the acceptor end of tRNA(Asp/Asn). The protein is Aspartate--tRNA(Asp/Asn) ligase of Campylobacter concisus (strain 13826).